A 190-amino-acid polypeptide reads, in one-letter code: Xanthine phosphoribosyltransferase (190 aa).

Residues L20 and N27 each coordinate xanthine. 127-131 (AYGNA) lines the 5-phospho-alpha-D-ribose 1-diphosphate pocket. Xanthine is bound at residue K155.

This sequence belongs to the purine/pyrimidine phosphoribosyltransferase family. Xpt subfamily. As to quaternary structure, homodimer.

It localises to the cytoplasm. It carries out the reaction XMP + diphosphate = xanthine + 5-phospho-alpha-D-ribose 1-diphosphate. Its pathway is purine metabolism; XMP biosynthesis via salvage pathway; XMP from xanthine: step 1/1. Converts the preformed base xanthine, a product of nucleic acid breakdown, to xanthosine 5'-monophosphate (XMP), so it can be reused for RNA or DNA synthesis. The chain is Xanthine phosphoribosyltransferase from Bacteroides thetaiotaomicron (strain ATCC 29148 / DSM 2079 / JCM 5827 / CCUG 10774 / NCTC 10582 / VPI-5482 / E50).